The sequence spans 180 residues: Telokin-like protein 20 (180 aa).

Positions 112–180 are disordered; sequence SKTDAAVHTS…KQKLDNAKQD (69 aa). The span at 156-165 shows a compositional bias: acidic residues; the sequence is DFEENIDDGD.

The chain is Telokin-like protein 20 (TLP20) from Lepidoptera (butterflies and moths).